The sequence spans 152 residues: Deoxyuridine 5'-triphosphate nucleotidohydrolase (152 aa).

Substrate contacts are provided by residues arginine 71–glycine 73, asparagine 84, leucine 88–aspartate 90, and lysine 98.

Belongs to the dUTPase family. Requires Mg(2+) as cofactor.

It carries out the reaction dUTP + H2O = dUMP + diphosphate + H(+). Its pathway is pyrimidine metabolism; dUMP biosynthesis; dUMP from dCTP (dUTP route): step 2/2. In terms of biological role, this enzyme is involved in nucleotide metabolism: it produces dUMP, the immediate precursor of thymidine nucleotides and it decreases the intracellular concentration of dUTP so that uracil cannot be incorporated into DNA. In Legionella pneumophila subsp. pneumophila (strain Philadelphia 1 / ATCC 33152 / DSM 7513), this protein is Deoxyuridine 5'-triphosphate nucleotidohydrolase.